The chain runs to 281 residues: N-acetyltransferase ECO1 (281 aa).

The CCHH-type zinc-finger motif lies at 33-57 (VKCDKCEMSYSSTSIEDRAIHEKYH). The disordered stretch occupies residues 86-105 (LSRSTGTITPLNSSPLKKSS). A compositionally biased stretch (low complexity) spans 95–105 (PLNSSPLKKSS). Lysine 223 is subject to N6-acetyllysine; by autocatalysis.

Belongs to the acetyltransferase family. ECO subfamily. In terms of assembly, binds specifically to CHL12, RFC1, RFC2, RFC3, RFC4, RFC5 and RAD24 when members of an RFC complex. Interacts with CHL1 and MPS3. Post-translationally, autoacetylates in vitro.

It is found in the nucleus. Required for establishment of sister chromatid cohesion during S phase but not for its further maintenance during G2 or M phases or for loading the cohesin complex onto DNA. Interacts with the three known alternate replication factor C (RFC) complexes, suggesting that these complexes have essential but redundant activity in cohesion establishment. Acts by acetylating the cohesin complex component SMC3. In vitro, possesses acetyltransferase activity where it can acetylate itself and components of the cohesin complex (MCD1, IRR1 and PDS5), but is unable to acetylate histones. This is N-acetyltransferase ECO1 (ECO1) from Saccharomyces cerevisiae (strain ATCC 204508 / S288c) (Baker's yeast).